A 1204-amino-acid polypeptide reads, in one-letter code: Cingulin (1204 aa).

Residues 7 to 359 are head; it reads MAEPRGPVDH…VMMSSGSSKA (353 aa). The disordered stretch occupies residues 25-48; sequence EPVSGAEMGTLRRGGRRPAKDARA. Residues 48–62 carry the ZIM motif; that stretch reads ASTYGVAVRVQGIAG. Positions 54 to 67 are interaction with TJP1/ZO1; the sequence is AVRVQGIAGQPFVV. The segment at 68–269 is disordered; sequence LNSGEKGGDS…SPLSGLSRAR (202 aa). Residues Ser95, Ser96, Ser98, Ser135, Ser137, Ser140, Ser155, and Ser165 each carry the phosphoserine modification. A compositionally biased stretch (polar residues) spans 126–140; sequence TQWNGKLLRSQSQAS. The segment covering 166–190 has biased composition (polar residues); that stretch reads PGSTIDTAPLSSVDSLINKFDSQLR. Basic and acidic residues predominate over residues 207-231; it reads EQRKRSKSLDSRLPRDTLEERERQS. Residues Ser214, Ser217, Ser260, Ser278, Ser340, and Ser353 each carry the phosphoserine modification. The stretch at 360–1161 forms a coiled coil; that stretch reads VAGQGELTRK…SLEKDSWRKA (802 aa). The residue at position 581 (Lys581) is an N6-acetyllysine. Positions 1156–1182 are disordered; that stretch reads DSWRKASRSAAESTLKHEGLSSDEEFD. Positions 1162-1204 are tail; that stretch reads SRSAAESTLKHEGLSSDEEFDGVYDPSSIASLLTESNLQTSSC. Phosphoserine is present on residues Ser1176 and Ser1177.

This sequence belongs to the cingulin family. Homodimer. Interacts with TJP1/ZO1 and SPEF1.

The protein localises to the cell junction. The protein resides in the tight junction. Its function is as follows. Probably plays a role in the formation and regulation of the tight junction (TJ) paracellular permeability barrier. In Callithrix jacchus (White-tufted-ear marmoset), this protein is Cingulin.